Consider the following 374-residue polypeptide: Aclacinomycin 10-hydroxylase RdmB (374 aa).

S-adenosyl-L-methionine is bound by residues Y171, G190, E213, D240, F241, and S255.

It belongs to the class I-like SAM-binding methyltransferase superfamily. Cation-independent O-methyltransferase family. In terms of assembly, homodimer. Homotetramer in solution. Tetramers might not be very stable in solution.

The enzyme catalyses 15-demethylaclacinomycin T + AH2 + O2 = 10-decarboxymethylaclacinomycin T + A + CO2 + H2O. It catalyses the reaction 10-carboxy-13-deoxycarminomycin + AH2 + O2 + H(+) = 10-hydroxy-13-deoxycarminomycin + A + CO2 + H2O. It carries out the reaction 10-hydroxy-13-deoxycarminomycin + S-adenosyl-L-methionine = 10-hydroxy-13-deoxydaunorubicin + S-adenosyl-L-homocysteine + H(+). It participates in antibiotic biosynthesis; rhodomycin biosynthesis. It functions in the pathway antibiotic biosynthesis; aclacinomycin biosynthesis. The hydroxylation reaction requires S-adenosyl-L-methionine (SAM) as a cofactor. S-adenosine-L-homocysteine and sinefungin (a SAM analog) can also support the decarboxylative hydroxylation activity with 10-carboxy-13-deoxycarminomycin as substrate. SAM and its analogs are considered an essential structural ligand to maintain ternary structural integrity and the proper binding mode and orientation of electron-rich substrates during decarboxylative hydroxylation of C-10 by RdmB. Functionally, involved in the biosynthesis of anthracyclines, an important group of aromatic polyketide antibiotics used in cancer chemotherapy. Acts as a 10-hydroxylase to catalyze a decarboxylative hydroxylation reaction on anthracyclines. During biosynthesis of rhodomycin, it catalyzes the removal of the carboxylic group at the C-10 position of 15-demethoxy-epsilon-rhodomycin coupled to hydroxylation at the same C-10 position to yield beta-rhodomycin. In vitro, can also catalyze the removal of the carboxylic group at the C-10 position of 15-demethoxyaclacinomycin T coupled to hydroxylation at the same C-10 position to yield 10-decarboxymethylaclacinomycin T. It can also use 10-carboxy-13-deoxycarminomycin, an analog of 15-demethoxy-epsilon-rhodomycin, to yield 10-hydroxy-13-deoxycarminomycin. Its function is as follows. In addition to its hydroxylation activity, it can act in vitro as a S-adenosyl-L-methionine-dependent O-methyltransferase and catalyze the 4-O-methylation of 10-hydroxy-13-deoxycarminomycin to 10-hydroxy-13-deoxydaunorubicin. The triglycosyl group of anthracyclines prevents the methylation reaction. The chain is Aclacinomycin 10-hydroxylase RdmB from Streptomyces purpurascens.